We begin with the raw amino-acid sequence, 230 residues long: Ureidoacrylate amidohydrolase RutB (230 aa).

The active-site Proton acceptor is D23. K132 is a catalytic residue. Catalysis depends on C165, which acts as the Nucleophile.

It belongs to the isochorismatase family. RutB subfamily.

It catalyses the reaction (Z)-3-ureidoacrylate + H2O + H(+) = (Z)-3-aminoacrylate + NH4(+) + CO2. The catalysed reaction is (Z)-3-ureidoacrylate + H2O = (Z)-3-aminoacrylate + carbamate + H(+). It carries out the reaction (Z)-2-methylureidoacrylate + H2O + H(+) = (Z)-2-methylaminoacrylate + NH4(+) + CO2. Hydrolyzes ureidoacrylate to form aminoacrylate and carbamate. The carbamate hydrolyzes spontaneously, thereby releasing one of the nitrogen atoms of the pyrimidine ring as ammonia and one of its carbon atoms as CO2. This chain is Ureidoacrylate amidohydrolase RutB, found in Yersinia enterocolitica serotype O:8 / biotype 1B (strain NCTC 13174 / 8081).